The primary structure comprises 445 residues: Ribosomal protein uS12 methylthiotransferase RimO (445 aa).

One can recognise an MTTase N-terminal domain in the interval 4–119 (LKFGLVSLGC…LDDAIEDFFN (116 aa)). 6 residues coordinate [4Fe-4S] cluster: Cys13, Cys48, Cys82, Cys156, Cys160, and Cys163. The region spanning 142–372 (TTGEYSSYVR…MLIQQQVSKN (231 aa)) is the Radical SAM core domain. Residues 375–441 (AKKIGKVYKV…EYDLIGVVYN (67 aa)) enclose the TRAM domain.

It belongs to the methylthiotransferase family. RimO subfamily. [4Fe-4S] cluster serves as cofactor.

It localises to the cytoplasm. The enzyme catalyses L-aspartate(89)-[ribosomal protein uS12]-hydrogen + (sulfur carrier)-SH + AH2 + 2 S-adenosyl-L-methionine = 3-methylsulfanyl-L-aspartate(89)-[ribosomal protein uS12]-hydrogen + (sulfur carrier)-H + 5'-deoxyadenosine + L-methionine + A + S-adenosyl-L-homocysteine + 2 H(+). In terms of biological role, catalyzes the methylthiolation of an aspartic acid residue of ribosomal protein uS12. This chain is Ribosomal protein uS12 methylthiotransferase RimO, found in Clostridium acetobutylicum (strain ATCC 824 / DSM 792 / JCM 1419 / IAM 19013 / LMG 5710 / NBRC 13948 / NRRL B-527 / VKM B-1787 / 2291 / W).